A 282-amino-acid chain; its full sequence is 3-methyl-2-oxobutanoate hydroxymethyltransferase (282 aa).

Aspartate 63 and aspartate 102 together coordinate Mg(2+). 3-methyl-2-oxobutanoate-binding positions include aspartate 63 to serine 64, aspartate 102, and lysine 132. Glutamate 134 provides a ligand contact to Mg(2+). Glutamate 200 serves as the catalytic Proton acceptor.

The protein belongs to the PanB family. As to quaternary structure, homodecamer; pentamer of dimers. The cofactor is Mg(2+).

The protein resides in the cytoplasm. It carries out the reaction 3-methyl-2-oxobutanoate + (6R)-5,10-methylene-5,6,7,8-tetrahydrofolate + H2O = 2-dehydropantoate + (6S)-5,6,7,8-tetrahydrofolate. The protein operates within cofactor biosynthesis; (R)-pantothenate biosynthesis; (R)-pantoate from 3-methyl-2-oxobutanoate: step 1/2. Functionally, catalyzes the reversible reaction in which hydroxymethyl group from 5,10-methylenetetrahydrofolate is transferred onto alpha-ketoisovalerate to form ketopantoate. The polypeptide is 3-methyl-2-oxobutanoate hydroxymethyltransferase (Mycobacterium sp. (strain JLS)).